The primary structure comprises 464 residues: Probable acid phosphatase DDB_G0284753 (464 aa).

The interval 1–29 (MFSYFRKSQQKVEENQNGGGGDGRGSGIK) is disordered. Gly residues predominate over residues 17-26 (NGGGGDGRGS). Histidine 81 (nucleophile) is an active-site residue. Positions 180–202 (SFTDEQEKSPHHSSFLVKPDNEE) are disordered. Aspartate 347 serves as the catalytic Proton donor.

Belongs to the histidine acid phosphatase family.

The catalysed reaction is a phosphate monoester + H2O = an alcohol + phosphate. In Dictyostelium discoideum (Social amoeba), this protein is Probable acid phosphatase DDB_G0284753.